The following is a 557-amino-acid chain: Protein NRT1/ PTR FAMILY 5.14 (557 aa).

2 helical membrane-spanning segments follow: residues 35-55 (AALF…GIGS) and 78-98 (AWSG…DAFL). Thr103 carries the post-translational modification Phosphothreonine. 10 helical membrane passes run 104–124 (IIIS…SAFL), 133–153 (SSTS…VAIG), 183–203 (FFNW…LVVV), 209–229 (FSWA…LVLF), 320–340 (IPVW…MTFF), 357–377 (IPPA…VPIY), 401–421 (IGTG…VEFK), 443–463 (IWWL…TLVG), 479–499 (IGLA…SLLI), and 526–546 (YFYW…LFIS).

The protein belongs to the major facilitator superfamily. Proton-dependent oligopeptide transporter (POT/PTR) (TC 2.A.17) family. In terms of tissue distribution, expressed in roots.

Its subcellular location is the membrane. This chain is Protein NRT1/ PTR FAMILY 5.14 (NPF5.14), found in Arabidopsis thaliana (Mouse-ear cress).